The sequence spans 816 residues: MESRVLLRTFCLIFGLGAVWGLGVDPSLQIDVLTELELGESTTGVRQVPGLHNGTKAFLFQDTPRSIKASTATAEQFFQKLRNKHEFTILVTLKQTHLNSGVILSIHHLDHRYLELESSGHRNEVRLHYRSGSHRPHTEVFPYILADDKWHKLSLAISASHLILHIDCNKIYERVVEKPSTDLPLGTTFWLGQRNNAHGYFKGIMQDVQLLVMPQGFIAQCPDLNRTCPTCNDFHGLVQKIMELQDILAKTSAKLSRAEQRMNRLDQCYCERTCTMKGTTYREFESWIDGCKNCTCLNGTIQCETLICPNPDCPLKSALAYVDGKCCKECKSICQFQGRTYFEGERNTVYSSSGVCVLYECKDQTMKLVESSGCPALDCPESHQITLSHSCCKVCKGYDFCSERHNCMENSICRNLNDRAVCSCRDGFRALREDNAYCEDIDECAEGRHYCRENTMCVNTPGSFMCICKTGYIRIDDYSCTEHDECITNQHNCDENALCFNTVGGHNCVCKPGYTGNGTTCKAFCKDGCRNGGACIAANVCACPQGFTGPSCETDIDECSDGFVQCDSRANCINLPGWYHCECRDGYHDNGMFSPSGESCEDIDECGTGRHSCANDTICFNLDGGYDCRCPHGKNCTGDCIHDGKVKHNGQIWVLENDRCSVCSCQNGFVMCRRMVCDCENPTVDLFCCPECDPRLSSQCLHQNGETLYNSGDTWVQNCQQCRCLQGEVDCWPLPCPDVECEFSILPENECCPRCVTDPCQADTIRNDITKTCLDEMNVVRFTGSSWIKHGTECTLCQCKNGHICCSVDPQCLQEL.

An N-terminal signal peptide occupies residues 1–21 (MESRVLLRTFCLIFGLGAVWG). 4 N-linked (GlcNAc...) asparagine glycosylation sites follow: N53, N225, N293, and N298. The region spanning 64–228 (PRSIKASTAT…AQCPDLNRTC (165 aa)) is the Laminin G-like domain. Positions 272-331 (RTCTMKGTTYREFESWIDGCKNCTCLNGTIQCETLICPNPDCPLKSALAYVDGKCCKECK) constitute a VWFC 1 domain. The EGF-like 1 domain maps to 397–439 (GYDFCSERHNCMENSICRNLNDRAVCSCRDGFRALREDNAYCE). Cystine bridges form between C401–C413, C407–C422, and C424–C438. Ca(2+) is bound by residues D440, I441, and E443. The EGF-like 2; calcium-binding domain maps to 440 to 481 (DIDECAEGRHYCRENTMCVNTPGSFMCICKTGYIRIDDYSCT). 9 disulfide bridges follow: C444/C457, C451/C466, C468/C480, C486/C499, C493/C508, C510/C521, C525/C535, C529/C541, and C543/C552. The Ca(2+) site is built by N459, T460, and S463. The region spanning 482 to 522 (EHDECITNQHNCDENALCFNTVGGHNCVCKPGYTGNGTTCK) is the EGF-like 3; calcium-binding domain. A glycan (N-linked (GlcNAc...) asparagine) is linked at N517. One can recognise an EGF-like 4 domain in the interval 523–553 (AFCKDGCRNGGACIAANVCACPQGFTGPSCE). A glycan (O-linked (GlcNAc...) threonine) is linked at T548. 3 residues coordinate Ca(2+): D555, I556, and E558. Positions 555-601 (DIDECSDGFVQCDSRANCINLPGWYHCECRDGYHDNGMFSPSGESCE) constitute an EGF-like 5; calcium-binding domain. 3 disulfides stabilise this stretch: C559/C572, C566/C581, and C583/C600. Residues N574, L575, and W578 each coordinate Ca(2+). D602, I603, and E605 together coordinate Ca(2+). The region spanning 602-637 (DIDECGTGRHSCANDTICFNLDGGYDCRCPHGKNCT) is the EGF-like 6; calcium-binding domain. Intrachain disulfides connect C606-C619, C613-C628, and C630-C636. The N-linked (GlcNAc...) asparagine glycan is linked to N615. Ca(2+) is bound by residues N621, L622, and G625. A glycan (N-linked (GlcNAc...) asparagine) is linked at N635. VWFC domains follow at residues 638 to 693 (GDCI…PECD) and 698 to 756 (SQCL…PRCV).

As to quaternary structure, homotrimer. Binds to PRKCB. Interacts with NICOL1; this interaction triggers epididymal differentiation. Interacts (via the EGF domains) with ROBO3 (via Fibronectin type-III 1 domain) with a 3:3 stoichiometry; this interaction promotes oligomerization of ROBO3 resulting in the repulsion of commissural axons in the midline.

The protein localises to the secreted. Its function is as follows. Plays multiple roles in neural tissues, regulates neuronal proliferation, survival, differentiation, polarization, as well as axon guidance and synaptic functions. Plays an important role in axon development during neuronal differentiation through the MAPK intracellular signaling pathway. Via binding to its receptor ROBO3, plays a role in axon guidance, functioning as a repulsive axon guidance cue that contributes to commissural axon guidance to the midline. Required for neuron survival through the modulation of MAPK signaling pathways too. Involved in the regulation of hypothalamic GNRH secretion and the control of puberty. In terms of biological role, epididymal-secreted protein that signals through a ROS1-pathway to regulate the epididymal initial segment (IS) maturation, sperm maturation and male fertility. This Homo sapiens (Human) protein is Protein kinase C-binding protein NELL2.